The chain runs to 416 residues: Lipid II:glycine glycyltransferase (416 aa).

The protein belongs to the FemABX family.

The protein localises to the cytoplasm. It carries out the reaction beta-D-GlcNAc-(1-&gt;4)-Mur2Ac(oyl-L-Ala-D-isoglutaminyl-L-Lys-D-Ala-D-Ala)-di-trans,octa-cis-undecaprenyl diphosphate + glycyl-tRNA(Gly) = beta-D-GlcNAc-(1-&gt;4)-Mur2Ac(oyl-L-Ala-D-isoglutaminyl-L-Lys-(N(6)-Gly)-D-Ala-D-Ala)-di-trans,octa-cis-undecaprenyl diphosphate + tRNA(Gly) + H(+). Catalyzes the incorporation of amino acid(s) into the interchain peptide bridge of peptidoglycan, using aminoacyl-tRNA as amino acid donor. The protein is Lipid II:glycine glycyltransferase (femX) of Staphylococcus epidermidis (strain ATCC 35984 / DSM 28319 / BCRC 17069 / CCUG 31568 / BM 3577 / RP62A).